The chain runs to 205 residues: Bacterial microcompartment protein trimer-1 (205 aa).

The tract at residues 1–20 (MDHAPERFDATPPAGEPDRP) is disordered. BMC domains are found at residues 21 to 106 (ALGV…RFLD) and 120 to 204 (SVII…GRLF).

Belongs to the bacterial microcompartments protein family. As to quaternary structure, homotrimerizes to form a pseudohexamer. Unlike its paralogs BMC-T2 and BMC-T3, the pseudohexamers do not stack. The concave side faces outward, with the N- and C-terminii exposed to the cytoplasm.

The protein localises to the bacterial microcompartment. Its function is as follows. A minor component of the bacterial microcompartment (BMC) shell. Expression of 5 proteins in E.coli (BMC-H (Hoch_5815), BMC-P (Hoch_5814), and 3 BMC-T (Hoch_5812, Hoch_5816, Hoch_3341)) forms 40 nm artificial BMCs with a molecular mass of 6.5 MDa. This protein does not form stacked pseudohexamers in the BMC. There are 20 BMC-T pseudohexamers per BMC, composed of mixed BMC-T1, BMC-T2 and BMC-T3. The shell facets are 20-30 Angstroms thick, with 1 of BMC-T trimers protruding to the exterior. The chain is Bacterial microcompartment protein trimer-1 from Haliangium ochraceum (strain DSM 14365 / JCM 11303 / SMP-2).